A 206-amino-acid chain; its full sequence is Regulatory protein CysR (206 aa).

An HTH crp-type domain is found at 120 to 196 (RRAEAKLASL…DRALIVRYPE (77 aa)). Positions 156-175 (HQVIAELSGSTRVTTTRLLG) form a DNA-binding region, H-T-H motif.

The protein localises to the cytoplasm. In terms of biological role, probably regulates the expression of genes from the sulfate permease complex. The chain is Regulatory protein CysR (cysR) from Synechococcus elongatus (strain ATCC 33912 / PCC 7942 / FACHB-805) (Anacystis nidulans R2).